Reading from the N-terminus, the 537-residue chain is Copine-3 (537 aa).

2 C2 domains span residues 1-115 and 124-247; these read MAAQ…TRPL and GKGS…PVEF. Position 14 is a phosphoserine (serine 14). Residues aspartate 22, aspartate 28, aspartate 81, aspartate 83, aspartate 93, aspartate 154, and aspartate 160 each contribute to the Ca(2+) site. Serine 197 carries the post-translational modification Phosphoserine. Residues aspartate 216, aspartate 218, and aspartate 224 each coordinate Ca(2+). Serine 243 carries the phosphoserine modification. A VWFA domain is found at 291-513; that stretch reads NFTVGVDFTG…AQCVLAEIPQ (223 aa).

The protein belongs to the copine family. Monomer. Interacts with ERBB2 (preferentially with the tyrosine phosphorylated form); this interaction occurs at the cell membrane and is increased in a growth factor heregulin-dependent manner. Interacts with SHC1; this interaction may mediate the binding of CPNE3 with ERBB2. Interacts with RACK1. Requires Ca(2+) as cofactor. Post-translationally, phosphorylated on serine and threonine residues. As to expression, expressed in breast and weakly in prostate and ovarian tissues. Expressed in neutrophils (at protein level). Widely expressed. Expressed in the brain. Expressed in neutrophil precursors from the bone marrow and peripheral blood. Expressed in primary breast tumors and ovarian endometrioid adenocarcinoma.

The protein resides in the nucleus. The protein localises to the cytoplasm. It localises to the cell membrane. It is found in the cell junction. Its subcellular location is the focal adhesion. Functionally, calcium-dependent phospholipid-binding protein that plays a role in ERBB2-mediated tumor cell migration in response to growth factor heregulin stimulation. This chain is Copine-3, found in Homo sapiens (Human).